The sequence spans 357 residues: 5-hydroxytryptamine receptor 5A (357 aa).

At 1–36 (MDLPINLTSFSLSTPSTLEPNRSLDTEALRTSQSFL) the chain is on the extracellular side. N-linked (GlcNAc...) asparagine glycans are attached at residues N6 and N21. Residues 37–63 (SAFRVLVLTLLGFLAAATFTWNLLVLA) form a helical membrane-spanning segment. Residues 64 to 76 (TILRVRTFHRVPH) lie on the Cytoplasmic side of the membrane. Residues 77-103 (NLVASMAISDVLVAVLVMPLSLVHELS) form a helical membrane-spanning segment. At 104–114 (GRRWQLGRRLC) the chain is on the extracellular side. A disulfide bridge connects residues C114 and C192. Residues 115–137 (QLWIACDVLCCTASIWNVTAIAL) traverse the membrane as a helical segment. Residue D121 participates in serotonin binding. Topologically, residues 138 to 155 (DRYWSITRHLEYTLRARK) are cytoplasmic. The helical transmembrane segment at 156-176 (RVSNVMILLTWALSAVISLAP) threads the bilayer. Topologically, residues 177–198 (LLFGWGETYSELSEECQVSREP) are extracellular. A helical transmembrane segment spans residues 199–220 (SYTVFSTVGAFYLPLCVVLFVY). Topologically, residues 221–287 (WKIYKAAKFR…QKEQRAALMV (67 aa)) are cytoplasmic. The chain crosses the membrane as a helical span at residues 288–312 (GILIGVFVLCWFPFFVTELISPLCS). The Extracellular segment spans residues 313–314 (WD). Residues 315 to 339 (IPALWKSIFLWLGYSNSFFNPLIYT) form a helical membrane-spanning segment. Over 340–357 (AFNRSYSSAFKVFFSKQQ) the chain is Cytoplasmic.

Belongs to the G-protein coupled receptor 1 family. In terms of tissue distribution, central nervous system.

The protein localises to the cell membrane. G-protein coupled receptor for 5-hydroxytryptamine (serotonin), a biogenic hormone that functions as a neurotransmitter, a hormone and a mitogen. Also functions as a receptor for ergot alkaloid derivatives and other psychoactive substances. Ligand binding causes a conformation change that triggers signaling via guanine nucleotide-binding proteins (G proteins) and modulates the activity of downstream effectors. Htr5a is coupled to G(i)/G(o) G alpha proteins and mediates inhibitory neurotransmission: signaling inhibits adenylate cyclase activity and activates a phosphatidylinositol-calcium second messenger system that regulates the release of Ca(2+) ions from intracellular stores. This chain is 5-hydroxytryptamine receptor 5A, found in Rattus norvegicus (Rat).